A 307-amino-acid polypeptide reads, in one-letter code: tRNA dimethylallyltransferase 2 (307 aa).

G9–T16 provides a ligand contact to ATP. T11–T16 is a substrate binding site. Residues D34 to Q37 form an interaction with substrate tRNA region.

This sequence belongs to the IPP transferase family. In terms of assembly, monomer. Mg(2+) is required as a cofactor.

The enzyme catalyses adenosine(37) in tRNA + dimethylallyl diphosphate = N(6)-dimethylallyladenosine(37) in tRNA + diphosphate. Its function is as follows. Catalyzes the transfer of a dimethylallyl group onto the adenine at position 37 in tRNAs that read codons beginning with uridine, leading to the formation of N6-(dimethylallyl)adenosine (i(6)A). This is tRNA dimethylallyltransferase 2 from Azobacteroides pseudotrichonymphae genomovar. CFP2.